The chain runs to 213 residues: ATP phosphoribosyltransferase (213 aa).

Belongs to the ATP phosphoribosyltransferase family. Short subfamily. In terms of assembly, heteromultimer composed of HisG and HisZ subunits.

The protein localises to the cytoplasm. The catalysed reaction is 1-(5-phospho-beta-D-ribosyl)-ATP + diphosphate = 5-phospho-alpha-D-ribose 1-diphosphate + ATP. It participates in amino-acid biosynthesis; L-histidine biosynthesis; L-histidine from 5-phospho-alpha-D-ribose 1-diphosphate: step 1/9. Its function is as follows. Catalyzes the condensation of ATP and 5-phosphoribose 1-diphosphate to form N'-(5'-phosphoribosyl)-ATP (PR-ATP). Has a crucial role in the pathway because the rate of histidine biosynthesis seems to be controlled primarily by regulation of HisG enzymatic activity. The protein is ATP phosphoribosyltransferase of Listeria monocytogenes serotype 4b (strain F2365).